A 318-amino-acid polypeptide reads, in one-letter code: Isoflavone reductase (318 aa).

NADP(+)-binding positions include 11 to 17, Arg36, and Lys44; that span reads GPTGAIG. The active-site Proton acceptor is Lys144. Position 148 (Arg148) interacts with NADP(+).

Belongs to the NmrA-type oxidoreductase family. Isoflavone reductase subfamily.

It carries out the reaction (3R)-vestitone + NADP(+) = 2'-hydroxyformononetin + NADPH + 2 H(+). It functions in the pathway phytoalexin biosynthesis; pterocarpan phytoalexin biosynthesis. In terms of biological role, reduces achiral isoflavones to chiral isoflavanones during the biosynthesis of chiral pterocarpan phytoalexins. The reduction product is a third isomer, which represents the penultimate intermediate in the synthesis of the phytoalexin (-)-medicarpin, the major phytoalexin in Alfalfa. This is Isoflavone reductase from Medicago sativa (Alfalfa).